Here is a 1604-residue protein sequence, read N- to C-terminus: Metabotropic glutamate receptor-like protein R (1604 aa).

Residues 1–27 (MVIKKPFIFIFICFLICLLICIDLTNC) form the signal peptide. Topologically, residues 28–1149 (NTINNNNNNN…TDVSKTKIAK (1122 aa)) are extracellular. The segment covering 38 to 69 (NNNNNNNNNNNNNNNNNNNNNNNNNNNNNNDN) has biased composition (low complexity). Positions 38 to 72 (NNNNNNNNNNNNNNNNNNNNNNNNNNNNNNDNNEN) are disordered. The stretch at 98–133 (DFYINKIKKEIKDREKYKNNIENEILKINSQKKRKK) forms a coiled coil. The segment at 213–263 (NNNNNNNNNNNNNNNNNNKNNNNNNNNKNNNNNNNNKNNNNNNNNKNNNKN) is disordered. 23 N-linked (GlcNAc...) asparagine glycosylation sites follow: N285, N327, N359, N375, N489, N498, N525, N577, N593, N624, N768, N837, N841, N851, N864, N876, N885, N888, N913, N967, N991, N1097, and N1109. A helical transmembrane segment spans residues 1150-1170 (IIIGISAIIVSIGVLITAILT). The Cytoplasmic segment spans residues 1171–1184 (FIYRKRKIMRYSNP). A helical membrane pass occupies residues 1185 to 1205 (VFLLIILVGCVCGLVSTFVSF). The Extracellular segment spans residues 1206–1211 (STTSAT). Residues 1212–1232 (CSIRMVLIPLFFFIITSAIFI) traverse the membrane as a helical segment. At 1233-1256 (KQYRVYCLIRGVEELHDMSIENSY) the chain is on the cytoplasmic side. A helical transmembrane segment spans residues 1257–1277 (LLKLQSFILIIPAILIAVSVI). Residues 1278 to 1304 (ATRMHRKYNFDLQKETIQAYCYSKNFY) lie on the Extracellular side of the membrane. A helical membrane pass occupies residues 1305–1325 (IIFICLALYEFSILLYGCWIV). Residues 1326–1340 (IKCRQYRSFPGSFNE) are Cytoplasmic-facing. The chain crosses the membrane as a helical span at residues 1341-1361 (FFYIGVLIYVLTVILVVSIPI). At 1362 to 1372 (GFALLNSALTD) the chain is on the extracellular side. Residues 1373 to 1393 (FLLYSIPILVLIVAIIGLLFA) form a helical membrane-spanning segment. Topologically, residues 1394 to 1604 (PKFYFLFRTD…KSSQNSPLLD (211 aa)) are cytoplasmic. Positions 1457–1604 (TGSNTSDDVS…KSSQNSPLLD (148 aa)) are disordered. Composition is skewed to low complexity over residues 1471–1527 (FDSP…NKNN) and 1534–1556 (SSSN…GRSS). Basic residues predominate over residues 1563–1572 (NNKKNRRKNS). A compositionally biased stretch (polar residues) spans 1573-1584 (LRTPILNSLLSP).

The protein belongs to the G-protein coupled receptor 3 family. GABA-B receptor subfamily.

The protein resides in the membrane. In Dictyostelium discoideum (Social amoeba), this protein is Metabotropic glutamate receptor-like protein R (grlR).